Consider the following 550-residue polypeptide: MTTKLIKHGSKAREQMLEGIDILADAVKVTLGPKGRNVLIEQSFGAPKITKDGVTVAKSIELKDKIRNAGAQLLKSAATKAAEVAGDGTTTATVLARALAREGNKLVAAGYNPMDLKRGMDLAVNAVVEEIKRSSKKINSQEEIAQVGTISSNGDKEIGEKIAKAMEEVGKEGVITVEEAKNFSFDVEVVKGMMFDRGYLSPYFVTNSEKMVAELENPFILLFEKKLSNLQPMLPILEAVVQSQRPLLIIAEDVEGEALATLVVNRLRGGLKVAAVKAPGFGDRRKAMMEDIAILTKGELITEDLGMKLENVNIKNLGTAKRVTISKENTVIVDGNGDKKNIEDRVLQIKSQIAETTSDYDKEKLQERLAKLSGGVAVLKVGGATEVEVKERKDRVEDALAATRAAVEEGVVAGGGVTLLHASQTLTKLKVENKDQQAGIEIVIEALKDPLKQIVKNAGENGGVVVGKLLEHNDKNYGFNAQDMQYVDMIKAGIIDPAKVVRTALQDAASVASLIITTETLIVDEPSDKEEPMPMRGGMGGMGGMGGMDF.

ATP contacts are provided by residues 30–33, K51, 87–91, G415, and D496; these read TLGP and DGTTT.

This sequence belongs to the chaperonin (HSP60) family. In terms of assembly, forms a cylinder of 14 subunits composed of two heptameric rings stacked back-to-back. Interacts with the co-chaperonin GroES.

The protein resides in the cytoplasm. It catalyses the reaction ATP + H2O + a folded polypeptide = ADP + phosphate + an unfolded polypeptide.. In terms of biological role, together with its co-chaperonin GroES, plays an essential role in assisting protein folding. The GroEL-GroES system forms a nano-cage that allows encapsulation of the non-native substrate proteins and provides a physical environment optimized to promote and accelerate protein folding. The protein is Chaperonin GroEL of Rickettsia typhi (strain ATCC VR-144 / Wilmington).